The following is a 1605-amino-acid chain: MEEHHRRLHVKAERASVIGGDIVDGAFGSWALRAARSEHQLKQQSNEDLAQNARISALLGEMRPRMSAMPPNGHQQQYQPQLRRKANTTNIVDVSSQVPSARNAIYGSWQDRHRPTRLYGSQLVSSSSTLPKYDQLYCNTASPLTGNGSTNTIATTGIRREPPEYGNVGRSVSTWQVTNSEHRPSLQAGWLKSSRPLARGALSPAAYFRDLENRHGSGASSPIVGGLSVVAVPITQRHAPTAGLAPISDDISTSKVSLDTENQQLNNEDSDKISGSALSRNTPRQASFMAAMQRHPLKESSTSIESNGGGTNTEEDQTVSATSKEDPSEDTGHDDPEETQEISETPIRRSRNRNASLRNRQSSRSLGGLDFEKLRMGTARVGDSNEATAENGTSSSSSRKNSRDDGLTSSPTTVAGPVFTTSSTSSISTSGEASSTAVAAAAAGSVAATTSRQTSSNSSVDSNHNEAMKMIRRARPKSYVLATSASMNEDVLSSSIIANEQSSSISHDTTTSGRELPSSLMGSTISMEMRSGGASSATTTTTSNSGQQTSRSLNAPHPPATHRLQRFIALFNSSKTSDGSGEHKKSRMKRSRTSLPASRFALPGTILQRDGVARQTWVKHQEIALGKSGKRNNWEDRWAVLCRRSLYLCVESPAYTTEKTIELGSHTRVDVCNAIVDIAYDWLSSSFSKQRHVVRIVTQNRSEHLIELNTESEMLSWISVLQSSSEDGIATGSSVDENELSTTGRHNNNAVSNSSALLHNSQSIASLASSSCSTATTSEFLNSQHTLQQQQQQQTNQKHQQTVNELSAGIVSHLPTSKSFGGLSTTASSTTENAKNRLIMHRYIAKNSQLQSPTANKKMETDPSTVPSSSQTMATTSSSFHHHSSQAGPSRDIENGEAPTATATTPKSGRKWKKSKAAKQGSGGGSSGSSSGSQQQGAAGAPQPVLGVRIADCPTGSCEDHVPMIVQACVCVIETYGMDTVGIYRIPGNTAAVNALKESLSNRGFDSVDLSKVESLDPRWRDVNVVSSLLKMFLRKLPEPLLTDKLYPFFIDANRISTHHNRLHKLRNLLRKLPRPHYDTLRFLIVHLSEITKHSDVNKMECRNLALMFGPSIVRPSDDNMATMVTHMSDQCKIIETLIHYNLWMFDESSTTEDAVPEQHPADGQNPLEPGGYGVGVPTGVSAASFNDMHNLIRKANEDQAAAMMNEGKGQKIKNMLRRNSRRDKSKSKLKIESTAPAAVNPRGWTQPTPSNTSAASVESAFCGNYQERDIDAEIESRQTVSPQMTSGSADGASSTRLDQSPSLESSLGSLPDTSRTEPILGSSGYDDDEAKEAARRKRQEEMYSARRIFIAGAAGAAAAATTTADAEKAAIDALANHSQHLHLASSPAFEVLSEETREKIRRMQKKQSWHDTKELRSGELLKTYSPTKDLTDALSCTSDYSTTSSAPLSTNPPLAVACADQPNSSSDYASSDPSPCARNPSTSPASRPSNLAISPAQLHATSSSGQSHQPMSRSQKIRLRTKLGSRDPARRHTLSDVDTLKEGRLDKLARWFGIRKSSPDVSRDEVSDDEKNHQEAPPLPAAAPPVIVRTSPNELTPVSGDELL.

Residues 1 to 574 (MEEHHRRLHV…QRFIALFNSS (574 aa)) form a required for localization to adherens junctions region. 3 disordered regions span residues 293–430 (QRHP…ISTS), 529–556 (MRSG…LNAP), and 574–593 (SKTS…RSRT). Over residues 323-334 (SKEDPSEDTGHD) the composition is skewed to basic and acidic residues. 3 stretches are compositionally biased toward low complexity: residues 353-365 (RNAS…SSRS), 420-430 (TTSSTSSISTS), and 530-552 (RSGG…TSRS). One can recognise a PH domain in the interval 599–726 (RFALPGTILQ…WISVLQSSSE (128 aa)). Polar residues-rich tracts occupy residues 728–745 (GIAT…TTGR) and 846–855 (KNSQLQSPTA). Disordered stretches follow at residues 728-752 (GIAT…NAVS) and 846-942 (KNSQ…AGAP). Residues 868–879 (SSSQTMATTSSS) show a composition bias toward low complexity. Positions 908-917 (SGRKWKKSKA) are enriched in basic residues. A compositionally biased stretch (low complexity) spans 928–941 (GSSSGSQQQGAAGA). The Rho-GAP domain maps to 948-1146 (VRIADCPTGS…TLIHYNLWMF (199 aa)). 5 disordered regions span residues 1152 to 1176 (TEDA…YGVG), 1207 to 1258 (EGKG…AASV), 1277 to 1339 (SRQT…RRKR), 1438 to 1533 (TSDY…ARRH), and 1554 to 1605 (GIRK…DELL). The segment covering 1211-1229 (QKIKNMLRRNSRRDKSKSK) has biased composition (basic residues). Polar residues-rich tracts occupy residues 1244-1257 (GWTQ…SAAS) and 1278-1300 (RQTV…RLDQ). A compositionally biased stretch (low complexity) spans 1301–1312 (SPSLESSLGSLP). The span at 1438 to 1453 (TSDYSTTSSAPLSTNP) shows a compositional bias: polar residues. Over residues 1461–1476 (DQPNSSSDYASSDPSP) the composition is skewed to low complexity. Composition is skewed to polar residues over residues 1480–1493 (NPST…SNLA) and 1500–1515 (HATS…MSRS). Positions 1558–1575 (SSPDVSRDEVSDDEKNHQ) are enriched in basic and acidic residues.

Associated with the catenin-cadherin complex consisting of hmr-1, hmp-1 and hmp-2; this is mediated by interaction with picc-1.

The protein resides in the cytoplasm. The protein localises to the cell junction. It localises to the adherens junction. Functionally, GTPase-activating protein for members of the Rho subfamily including Rac1, RhoA and cdc42 and other Ras-related subfamilies including let-60. Mediates radial (inner-outer) polarity and gastrulation by excluding par-6 from contacted cell surfaces; acts by inactivating cdc42 at inner cell surfaces which limits active cdc42 to outer cell surfaces devoid of cell-cell contacts, where cdc42 can bind and recruit par-6. Required for blastomere polarization. The protein is GTPase-activating protein pac-1 (pac-1) of Caenorhabditis elegans.